The following is a 252-amino-acid chain: Neurexophilin-3 (252 aa).

The signal sequence occupies residues 1 to 22 (MQLTRCCFVFLVQGSLYLVICG). The interval 23–75 (QEDGPPGSEDPEHDDHEGQPRPRVPRKRGHISPKSRPLANSTLLGLLAPPGEV) is II. The tract at residues 27-59 (PPGSEDPEHDDHEGQPRPRVPRKRGHISPKSRP) is disordered. Residues 45–55 (RVPRKRGHISP) show a composition bias toward basic residues. Residues Asn62, Asn127, Asn137, and Asn143 are each glycosylated (N-linked (GlcNAc...) asparagine). The interval 76–157 (WGILGQPPNR…LVPPSKAVEF (82 aa)) is III. The IV (linker domain) stretch occupies residues 158 to 166 (HQEQQIFIE). Residues 167–252 (AKASKIFNCR…HSDTPYYPSG (86 aa)) form a v (Cys-rich) region.

This sequence belongs to the neurexophilin family. In terms of processing, may be proteolytically processed at the boundary between the N-terminal non-conserved and the central conserved domain in neuron-like cells. As to expression, brain. Detected in several other tissues.

The protein resides in the secreted. In terms of biological role, may be signaling molecules that resemble neuropeptides. Ligand for alpha-neurexins. The chain is Neurexophilin-3 (Nxph3) from Rattus norvegicus (Rat).